Reading from the N-terminus, the 548-residue chain is Chaperonin GroEL (548 aa).

ATP contacts are provided by residues 30 to 33, Lys51, 87 to 91, Gly415, 479 to 481, and Asp495; these read TLGP, DGTTT, and NAA.

Belongs to the chaperonin (HSP60) family. In terms of assembly, forms a cylinder of 14 subunits composed of two heptameric rings stacked back-to-back. Interacts with the co-chaperonin GroES.

The protein resides in the cytoplasm. The catalysed reaction is ATP + H2O + a folded polypeptide = ADP + phosphate + an unfolded polypeptide.. Its function is as follows. Together with its co-chaperonin GroES, plays an essential role in assisting protein folding. The GroEL-GroES system forms a nano-cage that allows encapsulation of the non-native substrate proteins and provides a physical environment optimized to promote and accelerate protein folding. The protein is Chaperonin GroEL of Aliivibrio fischeri (strain MJ11) (Vibrio fischeri).